The primary structure comprises 220 residues: Flavin-dependent thymidylate synthase (220 aa).

The ThyX domain maps to 1 to 208 (MKIDILDKGF…PWTFEAFLKY (208 aa)). FAD is bound by residues Thr-55, 78-80 (RHR), and Glu-86. DUMP is bound by residues 75-78 (QWFR), 86-90 (ELSGR), and Arg-147. The ThyX motif motif lies at 78–88 (RHRIASYNELS). Residues 163–165 (NAR) and Asn-169 contribute to the FAD site. Residue Arg-174 coordinates dUMP. Catalysis depends on Arg-174, which acts as the Involved in ionization of N3 of dUMP, leading to its activation.

Belongs to the thymidylate synthase ThyX family. As to quaternary structure, homotetramer. The cofactor is FAD.

It catalyses the reaction dUMP + (6R)-5,10-methylene-5,6,7,8-tetrahydrofolate + NADPH + H(+) = dTMP + (6S)-5,6,7,8-tetrahydrofolate + NADP(+). It functions in the pathway pyrimidine metabolism; dTTP biosynthesis. Its function is as follows. Catalyzes the reductive methylation of 2'-deoxyuridine-5'-monophosphate (dUMP) to 2'-deoxythymidine-5'-monophosphate (dTMP) while utilizing 5,10-methylenetetrahydrofolate (mTHF) as the methyl donor, and NADPH and FADH(2) as the reductant. This Thermotoga sp. (strain RQ2) protein is Flavin-dependent thymidylate synthase.